Reading from the N-terminus, the 265-residue chain is Type 1 encapsulin shell protein (265 aa).

FMN-binding positions include 79–81 and Trp87; that span reads RAT. The segment at 184 to 189 is pore-forming loop; sequence EAGHYP. FMN is bound at residue Glu235.

This sequence belongs to the encapsulin family. Family 1 subfamily. In terms of assembly, this encapsulin nanocompartment is formed by 60 subunits; monomers form pentamers which assemble to form shells. There are 12 pores where the pentamers meet as well as 3-fold axis channels and dimer channels; none are larger than 3-4 Angstroms in diameter. The N-terminus of the protein is inside the shell, the C-terminus is outside. It depends on FMN as a cofactor.

It is found in the encapsulin nanocompartment. Functionally, shell component of a type 1 encapsulin nanocompartment. Assembles into proteinaceous shells 23-24 nm in diameter with 2-2.5 nm thick walls. Cargo protein Flp (ferritin-like protein, may store iron) is targeted to the interior via its C-terminal extension. This chain is Type 1 encapsulin shell protein, found in Thermotoga petrophila (strain ATCC BAA-488 / DSM 13995 / JCM 10881 / RKU-1).